The chain runs to 169 residues: Alpha-S2-casein-like B (169 aa).

An N-terminal signal peptide occupies residues 1-15; it reads MKFIILTCLLAVALA.

It belongs to the alpha-casein family. Mammary gland specific. Secreted in milk.

Its subcellular location is the secreted. Important role in the capacity of milk to transport calcium phosphate. The sequence is that of Alpha-S2-casein-like B (Csn1s2b) from Rattus norvegicus (Rat).